The following is a 1087-amino-acid chain: Band 4.1-like protein 3 (1087 aa).

Met-1 bears the N-acetylmethionine mark. Residues 1–43 (MTTESGSDSESKPDQEAEPQEAAGAQGRAGAPVPEPPKEEQQQ) form a disordered region. N-acetylthreonine; in Band 4.1-like protein 3, N-terminally processed is present on Thr-2. The segment covering 20-32 (QEAAGAQGRAGAP) has biased composition (low complexity). Ser-88 is subject to Phosphoserine. The region spanning 110–391 (MQCKVILLDG…EHHTFFRLLL (282 aa)) is the FERM domain. Residues 394–513 (APPKKFLTLG…PGLGTDSCPL (120 aa)) form a hydrophilic region. Residues Ser-420, Ser-443, and Ser-460 each carry the phosphoserine modification. Residues 459 to 469 (ISQTNLITTVT) show a composition bias toward polar residues. Disordered stretches follow at residues 459-529 (ISQT…TELR), 541-563 (GYEP…GPGR), 675-715 (SASL…EDAE), and 937-965 (SETL…SPGG). A phosphothreonine mark is found at Thr-469 and Thr-492. A spectrin--actin-binding region spans residues 514-860 (SPPSTHCAPT…VVQETVLVEE (347 aa)). The segment covering 516-526 (PSTHCAPTSPT) has biased composition (polar residues). Residues 681-691 (DPSDSSEEETD) are compositionally biased toward acidic residues. The span at 698-707 (AADGETTATE) shows a compositional bias: low complexity. Residue Thr-706 is modified to Phosphothreonine. A phosphoserine mark is found at Ser-708, Ser-960, and Ser-962. Positions 861-1083 (RRVVHASGDA…VHKETEITPE (223 aa)) are C-terminal (CTD). A compositionally biased stretch (polar residues) spans 947 to 960 (ESSTVKTETISFGS). A Phosphothreonine modification is found at Thr-1081.

In terms of assembly, interacts (via FERM domain) with CADM1. Interacts (via FERM domain) with PRMT3; the interaction is direct and inhibits the protein-arginine N-methyltransferase activity of PRMT3. Interacts with PRMT5. Interacts with PRMT6. Expressed at high levels in brain, with lower levels in kidney, intestine, and testis. Detected in lung.

It localises to the cytoplasm. It is found in the cytoskeleton. Its subcellular location is the cell junction. The protein resides in the cell membrane. Functionally, tumor suppressor that inhibits cell proliferation and promotes apoptosis. Modulates the activity of protein arginine N-methyltransferases, including PRMT3 and PRMT5. The chain is Band 4.1-like protein 3 from Homo sapiens (Human).